A 285-amino-acid polypeptide reads, in one-letter code: DNA repair protein RecO (285 aa).

The protein belongs to the RecO family.

Its function is as follows. Involved in DNA repair and RecF pathway recombination. The polypeptide is DNA repair protein RecO (Synechococcus sp. (strain JA-2-3B'a(2-13)) (Cyanobacteria bacterium Yellowstone B-Prime)).